Here is a 108-residue protein sequence, read N- to C-terminus: Thiosulfate sulfurtransferase GlpE (108 aa).

The region spanning 18–106 (ENEGATLADI…WERSGLPIET (89 aa)) is the Rhodanese domain. The active-site Cysteine persulfide intermediate is the C66.

The protein belongs to the GlpE family.

Its subcellular location is the cytoplasm. The catalysed reaction is thiosulfate + hydrogen cyanide = thiocyanate + sulfite + 2 H(+). It catalyses the reaction thiosulfate + [thioredoxin]-dithiol = [thioredoxin]-disulfide + hydrogen sulfide + sulfite + 2 H(+). Functionally, transferase that catalyzes the transfer of sulfur from thiosulfate to thiophilic acceptors such as cyanide or dithiols. May function in a CysM-independent thiosulfate assimilation pathway by catalyzing the conversion of thiosulfate to sulfite, which can then be used for L-cysteine biosynthesis. In Actinobacillus pleuropneumoniae serotype 7 (strain AP76), this protein is Thiosulfate sulfurtransferase GlpE.